A 423-amino-acid polypeptide reads, in one-letter code: Riboflavin biosynthesis protein RibBA (423 aa).

The DHBP synthase stretch occupies residues 1–204; that stretch reads MTRLDSVERA…IADLIEWRRK (204 aa). Residues 28 to 29, Asp-33, 141 to 145, and Glu-165 contribute to the D-ribulose 5-phosphate site; these read RE and RPGHT. Glu-29 contributes to the Mg(2+) binding site. Residue His-144 participates in Mg(2+) binding. The tract at residues 205–423 is GTP cyclohydrolase II; the sequence is HEKHIARVAE…AVPGEFGGAV (219 aa). 259 to 263 contributes to the GTP binding site; the sequence is RVHSE. Residues Cys-264, Cys-275, and Cys-277 each coordinate Zn(2+). GTP-binding positions include Gln-280, 303-305, and Thr-325; that span reads EGR. Residue Asp-337 is the Proton acceptor; for GTP cyclohydrolase activity of the active site. The active-site Nucleophile; for GTP cyclohydrolase activity is the Arg-339. Residues Thr-360 and Lys-365 each contribute to the GTP site.

In the N-terminal section; belongs to the DHBP synthase family. This sequence in the C-terminal section; belongs to the GTP cyclohydrolase II family. Requires Mg(2+) as cofactor. Mn(2+) serves as cofactor. Zn(2+) is required as a cofactor.

It catalyses the reaction D-ribulose 5-phosphate = (2S)-2-hydroxy-3-oxobutyl phosphate + formate + H(+). The enzyme catalyses GTP + 4 H2O = 2,5-diamino-6-hydroxy-4-(5-phosphoribosylamino)-pyrimidine + formate + 2 phosphate + 3 H(+). It participates in cofactor biosynthesis; riboflavin biosynthesis; 2-hydroxy-3-oxobutyl phosphate from D-ribulose 5-phosphate: step 1/1. It functions in the pathway cofactor biosynthesis; riboflavin biosynthesis; 5-amino-6-(D-ribitylamino)uracil from GTP: step 1/4. Catalyzes the conversion of D-ribulose 5-phosphate to formate and 3,4-dihydroxy-2-butanone 4-phosphate. In terms of biological role, catalyzes the conversion of GTP to 2,5-diamino-6-ribosylamino-4(3H)-pyrimidinone 5'-phosphate (DARP), formate and pyrophosphate. This is Riboflavin biosynthesis protein RibBA from Mycolicibacterium gilvum (strain PYR-GCK) (Mycobacterium gilvum (strain PYR-GCK)).